Consider the following 200-residue polypeptide: Recombination protein RecR (200 aa).

Residues 58–75 (CSNCFCLKISQTSPCNFC) form a C4-type zinc finger. A Toprim domain is found at 82-177 (SSLCIVATPK…KISRLALGMP (96 aa)).

It belongs to the RecR family.

Its function is as follows. May play a role in DNA repair. It seems to be involved in an RecBC-independent recombinational process of DNA repair. It may act with RecF and RecO. This is Recombination protein RecR from Chlamydia trachomatis serovar D (strain ATCC VR-885 / DSM 19411 / UW-3/Cx).